Consider the following 89-residue polypeptide: Small ribosomal subunit protein uS15 (89 aa).

It belongs to the universal ribosomal protein uS15 family. In terms of assembly, part of the 30S ribosomal subunit. Forms a bridge to the 50S subunit in the 70S ribosome, contacting the 23S rRNA.

Its function is as follows. One of the primary rRNA binding proteins, it binds directly to 16S rRNA where it helps nucleate assembly of the platform of the 30S subunit by binding and bridging several RNA helices of the 16S rRNA. Functionally, forms an intersubunit bridge (bridge B4) with the 23S rRNA of the 50S subunit in the ribosome. This is Small ribosomal subunit protein uS15 from Alcanivorax borkumensis (strain ATCC 700651 / DSM 11573 / NCIMB 13689 / SK2).